The primary structure comprises 609 residues: MATVHAALHAADASSSGSSSPVTASLYVGDLHPSVTEGILYDAFAEFKSLTSVRLCKDASSGRSLCYGYANFLSRQDANLAIEKKNNSLLNGKMIRVMWSVRAPDARRNGVGNVFVKNLPESVTNAVLQDMFKKFGNIVSCKVATLEDGKSRGYGFVQFEQEDAAHAAIQTLNSTIVADKEIYVGKFMKKTDRVKPEEKYTNLYMKNLDADVSEDLLREKFAEFGKIVSLAIAKDENRLCRGYAFVNFDNPEDARRAAETVNGTKFGSKCLYVGRAQKKAEREQLLREQFKEKHEEQKMIAKVSNIYVKNVNVAVTEEELRKHFSQCGTITSTKLMCDEKGKSKGFGFVCFSTPEEAIDAVKTFHGQMFHGKPLYVAIAQKKEDRKMQLQVQFGNRVEARKSSSSASVNPGTYAPLYYTNTHPGMVYQSYPLMWKSANMIGSSYPNSEAVTYPPMVANAPSKNRQNRIGKLDRNAVSYVPNVYQSTQMLPLSRDFSKQQHSRTYGRGKEMKKSIQQRQSETVGMEMQLLGELLHPLVEKLEPQLANKITGMLLEMDKSELLLLLKSPEDLAVRVDEAFEVLKSSKTNLTAPNTHRSDYLASGIAGVSIK.

RRM domains follow at residues 24-102, 112-189, 201-278, and 304-381; these read ASLY…WSVR, GNVF…KFMK, TNLY…RAQK, and SNIY…IAQK. In terms of domain architecture, PABC spans 509–586; it reads EMKKSIQQRQ…AFEVLKSSKT (78 aa).

It belongs to the polyadenylate-binding protein type-1 family. In terms of tissue distribution, expressed predominantly in siliques.

Its subcellular location is the cytoplasm. The protein resides in the nucleus. In terms of biological role, binds the poly(A) tail of mRNA. Appears to be an important mediator of the multiple roles of the poly(A) tail in mRNA biogenesis, stability and translation. The protein is Polyadenylate-binding protein 7 (PAB7) of Arabidopsis thaliana (Mouse-ear cress).